We begin with the raw amino-acid sequence, 132 residues long: Putative nickel-responsive regulator (132 aa).

Residues His77, His88, His90, and Cys96 each coordinate Ni(2+).

It belongs to the transcriptional regulatory CopG/NikR family. Ni(2+) serves as cofactor.

Functionally, transcriptional regulator. The polypeptide is Putative nickel-responsive regulator (Brucella abortus (strain S19)).